Reading from the N-terminus, the 740-residue chain is Phosphoribosylformylglycinamidine synthase subunit PurL (740 aa).

His49 is a catalytic residue. Residues Tyr52 and Lys91 each contribute to the ATP site. Glu93 serves as a coordination point for Mg(2+). Substrate contacts are provided by residues 94–97 and Arg116; that span reads SHNH. His95 serves as the catalytic Proton acceptor. Asp117 serves as a coordination point for Mg(2+). Gln245 is a substrate binding site. Asp273 provides a ligand contact to Mg(2+). 317-319 lines the substrate pocket; that stretch reads ESQ. Asp501 and Gly538 together coordinate ATP. Asn539 is a binding site for Mg(2+). Ser541 is a binding site for substrate.

Belongs to the FGAMS family. As to quaternary structure, monomer. Part of the FGAM synthase complex composed of 1 PurL, 1 PurQ and 2 PurS subunits.

Its subcellular location is the cytoplasm. The catalysed reaction is N(2)-formyl-N(1)-(5-phospho-beta-D-ribosyl)glycinamide + L-glutamine + ATP + H2O = 2-formamido-N(1)-(5-O-phospho-beta-D-ribosyl)acetamidine + L-glutamate + ADP + phosphate + H(+). It functions in the pathway purine metabolism; IMP biosynthesis via de novo pathway; 5-amino-1-(5-phospho-D-ribosyl)imidazole from N(2)-formyl-N(1)-(5-phospho-D-ribosyl)glycinamide: step 1/2. Part of the phosphoribosylformylglycinamidine synthase complex involved in the purines biosynthetic pathway. Catalyzes the ATP-dependent conversion of formylglycinamide ribonucleotide (FGAR) and glutamine to yield formylglycinamidine ribonucleotide (FGAM) and glutamate. The FGAM synthase complex is composed of three subunits. PurQ produces an ammonia molecule by converting glutamine to glutamate. PurL transfers the ammonia molecule to FGAR to form FGAM in an ATP-dependent manner. PurS interacts with PurQ and PurL and is thought to assist in the transfer of the ammonia molecule from PurQ to PurL. This is Phosphoribosylformylglycinamidine synthase subunit PurL from Sulfurovum sp. (strain NBC37-1).